Reading from the N-terminus, the 754-residue chain is Subtilisin-like protease SBT3.12 (754 aa).

The signal sequence occupies residues 1 to 28 (MGIVKGRSRAGLFIGFLFIVNVGFCVFA). Positions 29-117 (QESSNEERKI…VAPNRKVELQ (89 aa)) are cleaved as a propeptide — activation peptide. Residues 39–116 (YVVHLGVRRH…SVAPNRKVEL (78 aa)) enclose the Inhibitor I9 domain. A Peptidase S8 domain is found at 121–606 (IYDYLGLSPS…AGLVNAERAK (486 aa)). D151 functions as the Charge relay system in the catalytic mechanism. N206 carries N-linked (GlcNAc...) asparagine glycosylation. H224 serves as the catalytic Charge relay system. N239 and N369 each carry an N-linked (GlcNAc...) asparagine glycan. S537 acts as the Charge relay system in catalysis. N-linked (GlcNAc...) asparagine glycosylation is found at N629 and N740.

Belongs to the peptidase S8 family.

It is found in the secreted. The chain is Subtilisin-like protease SBT3.12 from Arabidopsis thaliana (Mouse-ear cress).